We begin with the raw amino-acid sequence, 453 residues long: Ribosomal protein uS12 methylthiotransferase RimO (453 aa).

The MTTase N-terminal domain occupies 6–116; it reads PKVGFVSLGC…VMEAVHEALP (111 aa). Residues C15, C51, C80, C147, C151, and C154 each coordinate [4Fe-4S] cluster. One can recognise a Radical SAM core domain in the interval 133–370; the sequence is LTPRHYAYLK…MEKQAQISAA (238 aa). Positions 373-441 constitute a TRAM domain; that stretch reads EAKIGTVQQC…EHDLYGDALP (69 aa).

The protein belongs to the methylthiotransferase family. RimO subfamily. It depends on [4Fe-4S] cluster as a cofactor.

Its subcellular location is the cytoplasm. The enzyme catalyses L-aspartate(89)-[ribosomal protein uS12]-hydrogen + (sulfur carrier)-SH + AH2 + 2 S-adenosyl-L-methionine = 3-methylsulfanyl-L-aspartate(89)-[ribosomal protein uS12]-hydrogen + (sulfur carrier)-H + 5'-deoxyadenosine + L-methionine + A + S-adenosyl-L-homocysteine + 2 H(+). In terms of biological role, catalyzes the methylthiolation of an aspartic acid residue of ribosomal protein uS12. This chain is Ribosomal protein uS12 methylthiotransferase RimO, found in Stenotrophomonas maltophilia (strain K279a).